A 266-amino-acid chain; its full sequence is Glucosamine-6-phosphate deaminase (266 aa).

Asp-67 acts as the Proton acceptor; for enolization step in catalysis. The For ring-opening step role is filled by Asn-139. Residue His-141 is the Proton acceptor; for ring-opening step of the active site. Residue Glu-146 is the For ring-opening step of the active site.

The protein belongs to the glucosamine/galactosamine-6-phosphate isomerase family. NagB subfamily. In terms of assembly, homohexamer.

The enzyme catalyses alpha-D-glucosamine 6-phosphate + H2O = beta-D-fructose 6-phosphate + NH4(+). It participates in amino-sugar metabolism; N-acetylneuraminate degradation; D-fructose 6-phosphate from N-acetylneuraminate: step 5/5. Functionally, catalyzes the reversible isomerization-deamination of glucosamine 6-phosphate (GlcN6P) to form fructose 6-phosphate (Fru6P) and ammonium ion. The protein is Glucosamine-6-phosphate deaminase of Marinomonas sp. (strain MWYL1).